The sequence spans 278 residues: Tropomyosin A (278 aa).

The stretch at 1–270 (IMMAMKLEKE…YRAISGELDT (270 aa)) forms a coiled coil. The segment at 92–134 (DFEQSSGRLTETSTKLDDASKAAEESERNRKTLETRSISDDER) is disordered. The span at 95 to 104 (QSSGRLTETS) shows a compositional bias: polar residues. A compositionally biased stretch (basic and acidic residues) spans 105-134 (TKLDDASKAAEESERNRKTLETRSISDDER).

Belongs to the tropomyosin family. In terms of assembly, homodimer.

Functionally, tropomyosin, in association with the troponin complex, plays a central role in the calcium dependent regulation of muscle contraction. The protein is Tropomyosin A of Echinococcus granulosus (Hydatid tapeworm).